Consider the following 742-residue polypeptide: Alcohol dehydrogenase (quinone), dehydrogenase subunit (742 aa).

The first 35 residues, 1 to 35, serve as a signal peptide directing secretion; it reads MTRPASAKRRSLLGILAAGTICAAALPYAAVPARA. Position 96 (glutamate 96) interacts with pyrroloquinoline quinone. Cysteine 142 and cysteine 143 are disulfide-bonded. Residue arginine 148 coordinates pyrroloquinoline quinone. A Ca(2+)-binding site is contributed by glutamate 216. Threonine 278 provides a ligand contact to pyrroloquinoline quinone. Residues asparagine 298 and aspartate 343 each contribute to the Ca(2+) site. The active-site Proton acceptor is the aspartate 343. Pyrroloquinoline quinone is bound by residues lysine 370 and isoleucine 584. The region spanning 636 to 715 is the Cytochrome c domain; sequence KVVDNGYFQY…AIRQYLIKRA (80 aa). Positions 649, 652, 653, and 692 each coordinate heme c. The segment covering 722-732 has biased composition (basic and acidic residues); that stretch reads EVDARKNDKNI. The interval 722-742 is disordered; the sequence is EVDARKNDKNIPENPTLGINP.

Belongs to the bacterial PQQ dehydrogenase family. The alcohol dehydrogenase multicomponent enzyme system is composed of a dehydrogenase subunit I (AdhA) and a cytochrome c subunit II (AdhB). Pyrroloquinoline quinone serves as cofactor. The cofactor is Ca(2+). Requires heme c as cofactor.

It is found in the cell membrane. It catalyses the reaction ethanol + a ubiquinone = a ubiquinol + acetaldehyde. Functionally, dehydrogenase component of the alcohol dehydrogenase multicomponent enzyme system which is involved in the production of acetic acid and in the ethanol oxidase respiratory chain. Quinohemoprotein alcohol dehydrogenase (ADH) catalyzes the oxidation of ethanol to acetaldehyde by transferring electrons to the ubiquinone embedded in the membrane phospholipids. The electrons transfer from ethanol to membranous ubiquinone occurs from pyrroloquinoline quinone (PQQ) to one heme c in subunit I (AdhA), and finally to two heme c in subunit II (AdhB). Besides ubiquinone reduction, ADH also has a ubiquinol (QH2) oxidation reaction which mediates electron transfer from ubiquinol to the non-energy generating bypass oxidase system. The electrons transfer occurs from ubiquinol (QH2) to the additional heme c within subunit II (AdhB). This chain is Alcohol dehydrogenase (quinone), dehydrogenase subunit, found in Acetobacter aceti.